Here is a 341-residue protein sequence, read N- to C-terminus: S-adenosylmethionine:tRNA ribosyltransferase-isomerase (341 aa).

This sequence belongs to the QueA family. In terms of assembly, monomer.

It is found in the cytoplasm. It carries out the reaction 7-aminomethyl-7-carbaguanosine(34) in tRNA + S-adenosyl-L-methionine = epoxyqueuosine(34) in tRNA + adenine + L-methionine + 2 H(+). The protein operates within tRNA modification; tRNA-queuosine biosynthesis. Transfers and isomerizes the ribose moiety from AdoMet to the 7-aminomethyl group of 7-deazaguanine (preQ1-tRNA) to give epoxyqueuosine (oQ-tRNA). The protein is S-adenosylmethionine:tRNA ribosyltransferase-isomerase of Chlorobium luteolum (strain DSM 273 / BCRC 81028 / 2530) (Pelodictyon luteolum).